A 1018-amino-acid polypeptide reads, in one-letter code: Collagen, type I, alpha 1a (1018 aa).

Residues Q1–S10 are compositionally biased toward basic and acidic residues. Residues Q1–Q991 are disordered. A compositionally biased stretch (pro residues) spans M13–S30. Low complexity predominate over residues P31–R58. Residues N67–E81 are compositionally biased toward basic and acidic residues. Residues P126–A136 are compositionally biased toward low complexity. Residues P138–P151 are compositionally biased toward pro residues. Over residues G152 to G170 the composition is skewed to gly residues. Composition is skewed to low complexity over residues P171 to P214 and S223 to V261. The span at G284 to G296 shows a compositional bias: gly residues. Composition is skewed to low complexity over residues V370–K385, A424–Q442, L452–P510, and R543–T558. Residues G568–G577 show a composition bias toward gly residues. 2 stretches are compositionally biased toward low complexity: residues A591 to T627 and P641 to V663. Residues P665 to P677 show a composition bias toward pro residues. 2 stretches are compositionally biased toward low complexity: residues E701–G746 and P775–S795. Residues A819–V829 show a composition bias toward pro residues. Low complexity predominate over residues P843 to P862. The segment covering R865–E876 has biased composition (basic and acidic residues). Residues S889–P925 are compositionally biased toward low complexity. Residues G932–K1018 enclose the Fibrillar collagen NC1 domain. The segment covering K948–E959 has biased composition (basic and acidic residues). Over residues T963–Q973 the composition is skewed to polar residues.

It belongs to the fibrillar collagen family.

Its subcellular location is the secreted. It is found in the extracellular space. It localises to the extracellular matrix. This Epinephelus costae (Goldblotch grouper) protein is Collagen, type I, alpha 1a.